A 565-amino-acid chain; its full sequence is Efflux pump aunC (565 aa).

Residues 1-14 (MSDTARISGGSFTS) show a composition bias toward polar residues. The tract at residues 1–57 (MSDTARISGGSFTSPPGRDVELNSFKEASQTRLYPYSSRKEEEGREDEQQRPEREED) is disordered. A compositionally biased stretch (basic and acidic residues) spans 38–54 (SRKEEEGREDEQQRPER). 14 consecutive transmembrane segments (helical) span residues 59–79 (GALTGYKLVLVTVGLCFCIFC), 103–123 (DVGWYASAYLLTTCAVTLPFG), 128–148 (FFPIKWVYLSALFVFELGSFI), 164–184 (VAGLGGGGLFSGSLLIITQCV), 194–214 (GFIMSIFAVASVIAPLMGGAF), 222–242 (WCFYINLPFGLVSAVVIFFTF), 257–277 (AAGLDPLGTATFLPAIVCLLL), 293–313 (IIALFTLFGVLLACFVGLQLW), 335–355 (LYGFCLNGAMFTFVYYLPIWF), 378–398 (VIFAIISGVLVSATGYFGPFM), 399–419 (LLSAAMASIAAGLLSMLHPSS), 425–445 (IGYQVLLGSSIGMGFQLPVFV), 457–477 (TATALMTFIQLLGGAIFVSVA), and 530–550 (VHTFYLAIGLAAASFLAATVI).

The protein belongs to the major facilitator superfamily. TCR/Tet family.

The protein resides in the cell membrane. Functionally, efflux pump; part of the gene cluster that mediates the biosynthesis of aurasperone B, a dimeric gamma-naphthopyrone. The sequence is that of Efflux pump aunC from Aspergillus niger (strain ATCC MYA-4892 / CBS 513.88 / FGSC A1513).